Consider the following 201-residue polypeptide: Large ribosomal subunit protein uL18 (201 aa).

Belongs to the universal ribosomal protein uL18 family. As to quaternary structure, part of the 50S ribosomal subunit. Contacts the 5S and 23S rRNAs.

Functionally, this is one of the proteins that bind and probably mediate the attachment of the 5S RNA into the large ribosomal subunit, where it forms part of the central protuberance. The polypeptide is Large ribosomal subunit protein uL18 (Thermococcus onnurineus (strain NA1)).